Here is a 64-residue protein sequence, read N- to C-terminus: PYLa/PGLa A (64 aa).

The signal sequence occupies residues 1–20 (MYKQIFLCLIIAALCATIMA). A propeptide spanning residues 21 to 35 (EASAFADADEDDDKR) is cleaved from the precursor. Leucine amide is present on leucine 59. The propeptide occupies 60–64 (GRRDS).

It belongs to the gastrin/cholecystokinin family. Magainin subfamily. In terms of tissue distribution, expressed by the skin glands. Synthesized in the stomach and stored in a novel granular multinucleated cell in the gastric mucosa. Stored as active, processed peptides in large granules within the granular gland secretions of the skin.

It is found in the secreted. Functionally, PGLa and PGLa-H display a broad-spectrum of antibacterial activity against a range of Gram-positive and Gram-negative bacteria. PGLa also displays antifungal activity against C.albicans ATCC 14053. PGLa-H shows moderate antibacterial activity against the multidrug-resistant methicillin-resistant S.aureus (MRSA) but exhibits very little hemolytic activity. The sequence is that of PYLa/PGLa A (pgla-a) from Xenopus laevis (African clawed frog).